A 260-amino-acid polypeptide reads, in one-letter code: Carbonic anhydrase 2 (260 aa).

Ser2 bears the N-acetylserine mark. Ser2 carries the post-translational modification Phosphoserine. An Alpha-carbonic anhydrase domain is found at 3 to 259 (HHWGYSKHNG…LKNRKIKASF (257 aa)). His64 serves as the catalytic Proton acceptor. Asn67 is a catalytic residue. Ser87 is modified (phosphoserine). The Zn(2+) site is built by His94, His96, and His119. Tyr127 is a catalytic residue. At Ser165 the chain carries Phosphoserine. A substrate-binding site is contributed by 198-199 (TT).

Belongs to the alpha-carbonic anhydrase family. As to quaternary structure, interacts with SLC4A4. Interaction with SLC4A7 regulates SLC4A7 transporter activity. Interacts with SLC26A6. The cofactor is Zn(2+).

The protein resides in the cytoplasm. The protein localises to the cell membrane. The enzyme catalyses hydrogencarbonate + H(+) = CO2 + H2O. It catalyses the reaction urea = cyanamide + H2O. Its activity is regulated as follows. Inhibited by acetazolamide. In terms of biological role, catalyzes the reversible hydration of carbon dioxide. Can also hydrate cyanamide to urea. Involved in the regulation of fluid secretion into the anterior chamber of the eye. Essential for bone resorption and osteoclast differentiation. Contributes to intracellular pH regulation in the duodenal upper villous epithelium during proton-coupled peptide absorption. Stimulates the chloride-bicarbonate exchange activity of SLC26A6. The protein is Carbonic anhydrase 2 (Ca2) of Mus musculus (Mouse).